The primary structure comprises 253 residues: A-type ATP synthase subunit B (253 aa).

It belongs to the ATPase alpha/beta chains family. Has multiple subunits with at least A(3), B(3), C, D, E, F, H, I and proteolipid K(x).

Its subcellular location is the cell membrane. Its function is as follows. Component of the A-type ATP synthase that produces ATP from ADP in the presence of a proton gradient across the membrane. The B chain is a regulatory subunit. This Methanothermococcus thermolithotrophicus (Methanococcus thermolithotrophicus) protein is A-type ATP synthase subunit B.